We begin with the raw amino-acid sequence, 179 residues long: MSKDLEVAGRYANALFQVAQDKDLVDVFSEELTELKAALKANEDFVKLLENPTFTTEQKKNLASAVFEKINPTLRDFIYLLIDRSREDYLSVIADVYQKRVNDLNGVADADVYSVVPLSEQELTALSRVFATKMNKTKLNIQNHIDKSLLGGVKVVIGTRIYDDSLKTKLKDMERQIKA.

It belongs to the ATPase delta chain family. F-type ATPases have 2 components, F(1) - the catalytic core - and F(0) - the membrane proton channel. F(1) has five subunits: alpha(3), beta(3), gamma(1), delta(1), epsilon(1). F(0) has three main subunits: a(1), b(2) and c(10-14). The alpha and beta chains form an alternating ring which encloses part of the gamma chain. F(1) is attached to F(0) by a central stalk formed by the gamma and epsilon chains, while a peripheral stalk is formed by the delta and b chains.

It is found in the cell membrane. Functionally, f(1)F(0) ATP synthase produces ATP from ADP in the presence of a proton or sodium gradient. F-type ATPases consist of two structural domains, F(1) containing the extramembraneous catalytic core and F(0) containing the membrane proton channel, linked together by a central stalk and a peripheral stalk. During catalysis, ATP synthesis in the catalytic domain of F(1) is coupled via a rotary mechanism of the central stalk subunits to proton translocation. This protein is part of the stalk that links CF(0) to CF(1). It either transmits conformational changes from CF(0) to CF(1) or is implicated in proton conduction. The chain is ATP synthase subunit delta from Listeria monocytogenes serotype 4b (strain CLIP80459).